Here is a 527-residue protein sequence, read N- to C-terminus: Peptide chain release factor 3 (527 aa).

The 269-residue stretch at 9-277 folds into the tr-type G domain; the sequence is AKRRTFAIIS…CIVDWAPQPL (269 aa). GTP contacts are provided by residues 18-25, 86-90, and 140-143; these read SHPDAGKT, DTPGH, and NKLD.

Belongs to the TRAFAC class translation factor GTPase superfamily. Classic translation factor GTPase family. PrfC subfamily.

It localises to the cytoplasm. Its function is as follows. Increases the formation of ribosomal termination complexes and stimulates activities of RF-1 and RF-2. It binds guanine nucleotides and has strong preference for UGA stop codons. It may interact directly with the ribosome. The stimulation of RF-1 and RF-2 is significantly reduced by GTP and GDP, but not by GMP. The protein is Peptide chain release factor 3 of Pseudomonas paraeruginosa (strain DSM 24068 / PA7) (Pseudomonas aeruginosa (strain PA7)).